A 111-amino-acid chain; its full sequence is Cell division protein FtsL (111 aa).

The Cytoplasmic segment spans residues Met1–Asp26. Residues Leu27–Trp47 form a helical membrane-spanning segment. Topologically, residues Ser48 to Lys111 are periplasmic. Residues Arg51 to Thr85 are a coiled coil.

This sequence belongs to the FtsL family.

It localises to the cell inner membrane. Essential cell division protein. This Geobacter sulfurreducens (strain ATCC 51573 / DSM 12127 / PCA) protein is Cell division protein FtsL.